Here is a 322-residue protein sequence, read N- to C-terminus: Porphobilinogen deaminase (322 aa).

Cys252 is subject to S-(dipyrrolylmethanemethyl)cysteine.

This sequence belongs to the HMBS family. As to quaternary structure, monomer. Dipyrromethane is required as a cofactor.

It carries out the reaction 4 porphobilinogen + H2O = hydroxymethylbilane + 4 NH4(+). The protein operates within porphyrin-containing compound metabolism; protoporphyrin-IX biosynthesis; coproporphyrinogen-III from 5-aminolevulinate: step 2/4. In terms of biological role, tetrapolymerization of the monopyrrole PBG into the hydroxymethylbilane pre-uroporphyrinogen in several discrete steps. The sequence is that of Porphobilinogen deaminase from Caulobacter vibrioides (strain ATCC 19089 / CIP 103742 / CB 15) (Caulobacter crescentus).